A 263-amino-acid chain; its full sequence is Small ribosomal subunit protein eS1 (263 aa).

Over residues 235-254 (HGEGGGGKREAGDKSERPEG) the composition is skewed to basic and acidic residues. Residues 235 to 263 (HGEGGGGKREAGDKSERPEGYEPPVQESV) are disordered.

Belongs to the eukaryotic ribosomal protein eS1 family. Component of the small ribosomal subunit. Mature ribosomes consist of a small (40S) and a large (60S) subunit. The 40S subunit contains about 33 different proteins and 1 molecule of RNA (18S). The 60S subunit contains about 49 different proteins and 3 molecules of RNA (28S, 5.8S and 5S).

The protein resides in the cytoplasm. This Bombyx mandarina (Wild silk moth) protein is Small ribosomal subunit protein eS1.